Consider the following 318-residue polypeptide: Ornithine carbamoyltransferase (318 aa).

Residues 63-66 (STRT), Gln-90, Arg-114, and 141-144 (HPCQ) contribute to the carbamoyl phosphate site. Residues Asn-172, Asp-235, and 239-240 (SM) each bind L-ornithine. Carbamoyl phosphate is bound by residues 275–276 (CL) and Arg-303.

This sequence belongs to the aspartate/ornithine carbamoyltransferase superfamily. OTCase family.

The protein resides in the cytoplasm. The enzyme catalyses carbamoyl phosphate + L-ornithine = L-citrulline + phosphate + H(+). It functions in the pathway amino-acid biosynthesis; L-arginine biosynthesis; L-arginine from L-ornithine and carbamoyl phosphate: step 1/3. Functionally, reversibly catalyzes the transfer of the carbamoyl group from carbamoyl phosphate (CP) to the N(epsilon) atom of ornithine (ORN) to produce L-citrulline. The polypeptide is Ornithine carbamoyltransferase (Prochlorococcus marinus (strain MIT 9313)).